We begin with the raw amino-acid sequence, 34 residues long: Histone H1, sperm (34 aa).

Residues 1-34 (PASPQKRAASPRRSPKKSPRKSPKKSPRKRSASP) form a disordered region. Basic residues predominate over residues 9–34 (ASPRRSPKKSPRKSPKKSPRKRSASP).

It belongs to the histone H1/H5 family. Sperm.

It is found in the nucleus. The protein resides in the chromosome. Histones H1 are necessary for the condensation of nucleosome chains into higher-order structures. The chain is Histone H1, sperm from Strongylocentrotus purpuratus (Purple sea urchin).